We begin with the raw amino-acid sequence, 190 residues long: Bifunctional protein PyrR (190 aa).

Positions 112 to 124 (VILVDDVLYSGRS) match the PRPP-binding motif.

The protein belongs to the purine/pyrimidine phosphoribosyltransferase family. PyrR subfamily.

The enzyme catalyses UMP + diphosphate = 5-phospho-alpha-D-ribose 1-diphosphate + uracil. Its function is as follows. Regulates the transcription of the pyrimidine nucleotide (pyr) operon in response to exogenous pyrimidines. In terms of biological role, also displays a weak uracil phosphoribosyltransferase activity which is not physiologically significant. This is Bifunctional protein PyrR from Mycolicibacterium paratuberculosis (strain ATCC BAA-968 / K-10) (Mycobacterium paratuberculosis).